The following is a 313-amino-acid chain: 3-ketodihydrosphingosine reductase TSC10 (313 aa).

Residue Leu-12 participates in NADP(+) binding. Positions 15, 17, and 19 each coordinate NADPH. A GXSXG motif is present at residues Gly-15–Gly-19. Leu-20 contacts NADP(+). NADPH contacts are provided by Arg-47, Lys-51, and Asp-86. Asp-86 is a binding site for NADP(+). Ser-160 (proton donor) is an active-site residue. The NADP(+) site is built by Tyr-174, Lys-178, and Ser-207. The active-site Proton acceptor is the Tyr-174. Lys-178 serves as the catalytic Lowers pKa of active site Tyr. Residues Val-278–Ile-298 traverse the membrane as a helical segment.

Belongs to the short-chain dehydrogenases/reductases (SDR) family.

It is found in the endoplasmic reticulum membrane. The enzyme catalyses sphinganine + NADP(+) = 3-oxosphinganine + NADPH + H(+). The protein operates within lipid metabolism; sphingolipid metabolism. Functionally, catalyzes the reduction of 3'-oxosphinganine (3-ketodihydrosphingosine/KDS) to sphinganine (dihydrosphingosine/DHS), the second step of de novo sphingolipid biosynthesis. The protein is 3-ketodihydrosphingosine reductase TSC10 (TSC10) of Kluyveromyces lactis (strain ATCC 8585 / CBS 2359 / DSM 70799 / NBRC 1267 / NRRL Y-1140 / WM37) (Yeast).